A 185-amino-acid chain; its full sequence is Ribosome-recycling factor (185 aa).

It belongs to the RRF family.

It is found in the cytoplasm. Responsible for the release of ribosomes from messenger RNA at the termination of protein biosynthesis. May increase the efficiency of translation by recycling ribosomes from one round of translation to another. The protein is Ribosome-recycling factor of Methylobacillus flagellatus (strain ATCC 51484 / DSM 6875 / VKM B-1610 / KT).